The primary structure comprises 102 residues: DET1- and DDB1-associated protein 1 (102 aa).

Positions 67–102 (NAAKKRDQEQVEIEGENSAPPRKIARTDSQDMNEDT) are disordered.

Belongs to the DDA1 family. In terms of assembly, component of numerous DCX (DDB1-CUL4-X-box) E3 ubiquitin-protein ligase complexes which consist of a core of DDB1, cullin-4 (CUL4A or CUL4B), DDA1 and RBX1.

Its pathway is protein modification; protein ubiquitination. In terms of biological role, functions as a component of numerous distinct DCX (DDB1-CUL4-X-box) E3 ubiquitin-protein ligase complexes which mediate the ubiquitination and subsequent proteasomal degradation of target proteins. In the DCX complexes, acts as a scaffolding subunit required to stabilize the complex. In Gallus gallus (Chicken), this protein is DET1- and DDB1-associated protein 1.